Reading from the N-terminus, the 470-residue chain is Neuraminidase (470 aa).

Residues 1–6 lie on the Intravirion side of the membrane; that stretch reads MNPNQK. The chain crosses the membrane as a helical span at residues 7–27; it reads IITIGSICMAIGIISLILQIG. The interval 11-33 is involved in apical transport and lipid raft association; that stretch reads GSICMAIGIISLILQIGNIISIW. Over 28–470 the chain is Virion surface; that stretch reads NIISIWVSHS…GAELPFTIDK (443 aa). Positions 36-90 are hypervariable stalk region; that stretch reads HSIQTGSQNHTGICNQRIITYENSTWVNQTYVNISNTNVVAGKDTTSMTLAGNSS. Asn44, Asn58, Asn63, Asn68, and Asn88 each carry an N-linked (GlcNAc...) asparagine; by host glycan. The head of neuraminidase stretch occupies residues 91–470; sequence LCPIRGWAIY…GAELPFTIDK (380 aa). 8 disulfides stabilise this stretch: Cys92–Cys417, Cys124–Cys129, Cys184–Cys231, Cys233–Cys238, Cys279–Cys292, Cys281–Cys290, Cys318–Cys335, and Cys421–Cys447. Arg118 contacts substrate. N-linked (GlcNAc...) asparagine; by host glycosylation occurs at Asn146. The active-site Proton donor/acceptor is Asp151. Arg152 is a binding site for substrate. Residue Asn235 is glycosylated (N-linked (GlcNAc...) asparagine; by host). Substrate is bound at residue 277-278; that stretch reads EE. Substrate is bound at residue Arg293. Residues Asp294, Gly298, and Asp324 each coordinate Ca(2+). Asn365 carries N-linked (GlcNAc...) asparagine; by host glycosylation. Arg368 lines the substrate pocket. Catalysis depends on Tyr402, which acts as the Nucleophile. The N-linked (GlcNAc...) asparagine; by host glycan is linked to Asn455.

It belongs to the glycosyl hydrolase 34 family. In terms of assembly, homotetramer. Ca(2+) is required as a cofactor. Post-translationally, N-glycosylated.

The protein localises to the virion membrane. It is found in the host apical cell membrane. The enzyme catalyses Hydrolysis of alpha-(2-&gt;3)-, alpha-(2-&gt;6)-, alpha-(2-&gt;8)- glycosidic linkages of terminal sialic acid residues in oligosaccharides, glycoproteins, glycolipids, colominic acid and synthetic substrates.. Its activity is regulated as follows. Inhibited by the neuraminidase inhibitors zanamivir (Relenza) and oseltamivir (Tamiflu). These drugs interfere with the release of progeny virus from infected cells and are effective against all influenza strains. Resistance to neuraminidase inhibitors is quite rare. Its function is as follows. Catalyzes the removal of terminal sialic acid residues from viral and cellular glycoconjugates. Cleaves off the terminal sialic acids on the glycosylated HA during virus budding to facilitate virus release. Additionally helps virus spread through the circulation by further removing sialic acids from the cell surface. These cleavages prevent self-aggregation and ensure the efficient spread of the progeny virus from cell to cell. Otherwise, infection would be limited to one round of replication. Described as a receptor-destroying enzyme because it cleaves a terminal sialic acid from the cellular receptors. May facilitate viral invasion of the upper airways by cleaving the sialic acid moieties on the mucin of the airway epithelial cells. Likely to plays a role in the budding process through its association with lipid rafts during intracellular transport. May additionally display a raft-association independent effect on budding. Plays a role in the determination of host range restriction on replication and virulence. Sialidase activity in late endosome/lysosome traffic seems to enhance virus replication. The sequence is that of Neuraminidase from Influenza A virus (strain A/Brazil/11/1978 H1N1).